The primary structure comprises 317 residues: Malate dehydrogenase (317 aa).

NAD(+)-binding positions include 7–13 and Asp34; that span reads GAAGGIG. Arg81 and Arg87 together coordinate substrate. NAD(+) is bound by residues Asn94 and 117–119; that span reads VTN. Asn119 and Arg153 together coordinate substrate. His177 acts as the Proton acceptor in catalysis. Met231 is a binding site for NAD(+).

The protein belongs to the LDH/MDH superfamily. MDH type 1 family. As to quaternary structure, homodimer.

The catalysed reaction is (S)-malate + NAD(+) = oxaloacetate + NADH + H(+). Its function is as follows. Catalyzes the reversible oxidation of malate to oxaloacetate. The chain is Malate dehydrogenase from Actinobacillus pleuropneumoniae serotype 5b (strain L20).